We begin with the raw amino-acid sequence, 98 residues long: MNHLQQRQLFLENLLVGVNNTFHQMQKHSINTCCQSLQKILDHLILLQTIHSPAFRLDRMQLRQMQTLACLWIHQHNHDHQAMLGAIKWISPLIKELR.

Belongs to the rotavirus A NSP6 family. As to quaternary structure, interacts with NSP2 and NSP5.

The protein resides in the host cytoplasm. It localises to the host mitochondrion. This is Non-structural protein 6 from Rotavirus A (isolate RVA/Human/United Kingdom/A64/1987/G10P11[14]) (RV-A).